We begin with the raw amino-acid sequence, 207 residues long: Putative transcriptional regulator (207 aa).

The Response regulatory domain occupies 3-118 (KVLIVDDHPA…ELLLAAKAVL (116 aa)). Asp-9 and Asp-53 each carry 4-aspartylphosphate. The 66-residue stretch at 140–205 (EARMLESLSD…GLIDFARRHE (66 aa)) folds into the HTH luxR-type domain. A DNA-binding region (H-T-H motif) is located at residues 155 to 174 (LQYLANGNTNKAIAQQLFLS).

In terms of biological role, probable transcriptional regulator. The sequence is that of Putative transcriptional regulator from Pseudomonas aeruginosa (strain ATCC 15692 / DSM 22644 / CIP 104116 / JCM 14847 / LMG 12228 / 1C / PRS 101 / PAO1).